We begin with the raw amino-acid sequence, 116 residues long: Prefoldin subunit beta (116 aa).

The protein belongs to the prefoldin subunit beta family. As to quaternary structure, heterohexamer of two alpha and four beta subunits.

The protein resides in the cytoplasm. In terms of biological role, molecular chaperone capable of stabilizing a range of proteins. Seems to fulfill an ATP-independent, HSP70-like function in archaeal de novo protein folding. This Thermococcus onnurineus (strain NA1) protein is Prefoldin subunit beta.